The sequence spans 359 residues: S-geranylgeranyl-glutathione receptor P2RY8 (359 aa).

Residues 1 to 19 (MQVPNSTGPDNATLQMLRN) are Extracellular-facing. Residues N5 and N11 are each glycosylated (N-linked (GlcNAc...) asparagine). Residues 20 to 40 (PAIAVALPVVYSLVAAVSIPG) form a helical membrane-spanning segment. Over 41-57 (NLFSLWVLCRRMGPRSP) the chain is Cytoplasmic. The helical transmembrane segment at 58–78 (SVIFMINLSVTDLMLASVLPF) threads the bilayer. At 79–88 (QIYYHCNRHH) the chain is on the extracellular side. The helical transmembrane segment at 89-109 (WVFGVLLCNVVTVAFYANMYS) threads the bilayer. At 110–138 (SILTMTCISVERFLGVLYPLSSKRWRRRR) the chain is on the cytoplasmic side. The helical transmembrane segment at 139-159 (YAVAACAGTWLLLLTALSPLA) threads the bilayer. The Extracellular segment spans residues 160 to 187 (RTDLTYPVHALGIITCFDVLKWTMLPSV). A helical membrane pass occupies residues 188 to 208 (AMWAVFLFTIFILLFLIPFVI). Over 209-237 (TVACYTATILKLLRTEEAHGREQRRRAVG) the chain is Cytoplasmic. The chain crosses the membrane as a helical span at residues 238-258 (LAAVVLLAFVTCFAPNNFVLL). Over 259-275 (AHIVSRLFYGKSYYHVY) the chain is Extracellular. A helical transmembrane segment spans residues 276 to 296 (KLTLCLSCLNNCLDPFVYYFA). Residues 297-359 (SREFQLRLRE…PGLQRQESVF (63 aa)) lie on the Cytoplasmic side of the membrane. The interval 329–359 (RTTSVRSEAGAHPEGMEGATRPGLQRQESVF) is disordered.

It belongs to the G-protein coupled receptor 1 family. Barely detectable in normal blood leukocytes. Weaker expression was seen in heart, kidney and lung. Not detected in brain. Expressed in B cells and follicular helper T cells in germinal centers (at protein level).

It localises to the cell membrane. Its function is as follows. G protein-coupled receptor for S-geranylgeranyl-glutathione (GGG), an endogenous metabolite present in lymphoid tissues. Couples the binding of GGG to the activation of GNA13 and downstream repression of AKT activation in lymphocytes defining their positioning and growth within lymphoid organs. In lymphoid follicles, confines B cells and follicular helper T cells in germinal centers (GCs) in response to GGG local gradients established by GGT5 (via GGG catabolism) and ABCC1 (via extracellular transport) with lower concentrations of GGG found in the follicular dendritic cell network region around which germinal centers are formed. In the bone marrow, also in response to GGG gradients established by GGT5 and ABCC1, it restricts chemotactic transmigration of B cells, T cells and NK cells from blood vessels to the bone marrow parenchyma. Contributes to GNA13-dependent pathway that suppresses GC B cell growth. This chain is S-geranylgeranyl-glutathione receptor P2RY8, found in Homo sapiens (Human).